The primary structure comprises 121 residues: Large ribosomal subunit protein uL18 (121 aa).

This sequence belongs to the universal ribosomal protein uL18 family. Part of the 50S ribosomal subunit; part of the 5S rRNA/L5/L18/L25 subcomplex. Contacts the 5S and 23S rRNAs.

Functionally, this is one of the proteins that bind and probably mediate the attachment of the 5S RNA into the large ribosomal subunit, where it forms part of the central protuberance. In Paracidovorax citrulli (strain AAC00-1) (Acidovorax citrulli), this protein is Large ribosomal subunit protein uL18.